Reading from the N-terminus, the 156-residue chain is D-aminoacyl-tRNA deacylase (156 aa).

Positions 137 to 138 (GP) match the Gly-cisPro motif, important for rejection of L-amino acids motif.

Belongs to the DTD family. Homodimer.

It localises to the cytoplasm. The catalysed reaction is glycyl-tRNA(Ala) + H2O = tRNA(Ala) + glycine + H(+). The enzyme catalyses a D-aminoacyl-tRNA + H2O = a tRNA + a D-alpha-amino acid + H(+). Functionally, an aminoacyl-tRNA editing enzyme that deacylates mischarged D-aminoacyl-tRNAs. Also deacylates mischarged glycyl-tRNA(Ala), protecting cells against glycine mischarging by AlaRS. Acts via tRNA-based rather than protein-based catalysis; rejects L-amino acids rather than detecting D-amino acids in the active site. By recycling D-aminoacyl-tRNA to D-amino acids and free tRNA molecules, this enzyme counteracts the toxicity associated with the formation of D-aminoacyl-tRNA entities in vivo and helps enforce protein L-homochirality. In Ruegeria sp. (strain TM1040) (Silicibacter sp.), this protein is D-aminoacyl-tRNA deacylase.